The sequence spans 192 residues: Adenylate kinase (192 aa).

10 to 18 contributes to the ATP binding site; it reads GVPGVGGTT.

This sequence belongs to the archaeal adenylate kinase family. As to quaternary structure, monomer.

It localises to the cytoplasm. The catalysed reaction is AMP + ATP = 2 ADP. The protein is Adenylate kinase of Methanococcus maripaludis (strain C7 / ATCC BAA-1331).